A 331-amino-acid polypeptide reads, in one-letter code: Myc-associated zinc finger protein (331 aa).

Disordered stretches follow at residues 46–65 and 108–131; these read AQSPFQAAPAPPPTPQAPAA and TVDTAALKQPPAPPPPPPAVSAPA. Over residues 117 to 127 the composition is skewed to pro residues; sequence PPAPPPPPPAV. C2H2-type zinc fingers lie at residues 177–199, 266–288, 294–316, and 324–331; these read YICALCAKEFKNGYNLRRHEAIH, HACEMCGKAFRDVYHLNRHKLSH, YQCPVCQQRFKRKDRMSYHVRSH, and YNCSHCGK.

Interacts with BPTF. Ubiquitously expressed.

The protein localises to the nucleus. In terms of biological role, transcriptional regulator. Acts as a transcriptional activator that binds to purine-rich GAGA sites found in the promoter of many genes including insulin I and II and islet amyloid polypeptide. The polypeptide is Myc-associated zinc finger protein (MAZ) (Mesocricetus auratus (Golden hamster)).